A 185-amino-acid polypeptide reads, in one-letter code: NADH-quinone oxidoreductase subunit B (185 aa).

[4Fe-4S] cluster is bound by residues Cys-37, Cys-38, Cys-103, and Cys-132.

This sequence belongs to the complex I 20 kDa subunit family. NDH-1 is composed of 14 different subunits. Subunits NuoB, C, D, E, F, and G constitute the peripheral sector of the complex. The cofactor is [4Fe-4S] cluster.

The protein resides in the cell membrane. It catalyses the reaction a quinone + NADH + 5 H(+)(in) = a quinol + NAD(+) + 4 H(+)(out). NDH-1 shuttles electrons from NADH, via FMN and iron-sulfur (Fe-S) centers, to quinones in the respiratory chain. The immediate electron acceptor for the enzyme in this species is believed to be a menaquinone. Couples the redox reaction to proton translocation (for every two electrons transferred, four hydrogen ions are translocated across the cytoplasmic membrane), and thus conserves the redox energy in a proton gradient. The protein is NADH-quinone oxidoreductase subunit B of Thermobifida fusca (strain YX).